We begin with the raw amino-acid sequence, 673 residues long: UvrABC system protein B (673 aa).

The region spanning 26 to 183 (EGLEDGLAHQ…RRLAELQYTR (158 aa)) is the Helicase ATP-binding domain. 39–46 (GVTGSGKT) is a binding site for ATP. The Beta-hairpin signature appears at 92–115 (YYDYYQPEAYVPSSDTFIEKDASV). Residues 431–597 (QVDDLLSEIR…GLNKKVVDIL (167 aa)) form the Helicase C-terminal domain. Residues 633 to 668 (QQKIHELEGQMMQHAQNLEFEEAAQIRDQLHQLREL) enclose the UVR domain.

The protein belongs to the UvrB family. As to quaternary structure, forms a heterotetramer with UvrA during the search for lesions. Interacts with UvrC in an incision complex.

The protein resides in the cytoplasm. Functionally, the UvrABC repair system catalyzes the recognition and processing of DNA lesions. A damage recognition complex composed of 2 UvrA and 2 UvrB subunits scans DNA for abnormalities. Upon binding of the UvrA(2)B(2) complex to a putative damaged site, the DNA wraps around one UvrB monomer. DNA wrap is dependent on ATP binding by UvrB and probably causes local melting of the DNA helix, facilitating insertion of UvrB beta-hairpin between the DNA strands. Then UvrB probes one DNA strand for the presence of a lesion. If a lesion is found the UvrA subunits dissociate and the UvrB-DNA preincision complex is formed. This complex is subsequently bound by UvrC and the second UvrB is released. If no lesion is found, the DNA wraps around the other UvrB subunit that will check the other stand for damage. This is UvrABC system protein B from Klebsiella pneumoniae (strain 342).